Consider the following 156-residue polypeptide: ATP synthase subunit b (156 aa).

The helical transmembrane segment at 7–29 (LLGQAISFALFVWFCMKYVWPPL) threads the bilayer.

The protein belongs to the ATPase B chain family. As to quaternary structure, F-type ATPases have 2 components, F(1) - the catalytic core - and F(0) - the membrane proton channel. F(1) has five subunits: alpha(3), beta(3), gamma(1), delta(1), epsilon(1). F(0) has three main subunits: a(1), b(2) and c(10-14). The alpha and beta chains form an alternating ring which encloses part of the gamma chain. F(1) is attached to F(0) by a central stalk formed by the gamma and epsilon chains, while a peripheral stalk is formed by the delta and b chains.

Its subcellular location is the cell inner membrane. F(1)F(0) ATP synthase produces ATP from ADP in the presence of a proton or sodium gradient. F-type ATPases consist of two structural domains, F(1) containing the extramembraneous catalytic core and F(0) containing the membrane proton channel, linked together by a central stalk and a peripheral stalk. During catalysis, ATP synthesis in the catalytic domain of F(1) is coupled via a rotary mechanism of the central stalk subunits to proton translocation. Its function is as follows. Component of the F(0) channel, it forms part of the peripheral stalk, linking F(1) to F(0). This chain is ATP synthase subunit b, found in Vibrio parahaemolyticus serotype O3:K6 (strain RIMD 2210633).